The sequence spans 335 residues: Avermitilol synthase (335 aa).

Aspartate 80, aspartate 84, asparagine 219, serine 223, and glutamate 227 together coordinate Mg(2+). The short motif at 80 to 84 (DDQFD) is the DDXXD motif element.

The protein belongs to the terpene synthase family. Mg(2+) serves as cofactor.

The catalysed reaction is (2E,6E)-farnesyl diphosphate + H2O = avermitilol + diphosphate. Functionally, catalyzes the cyclization of farnesyl diphosphate to avermitilol. The chain is Avermitilol synthase (tpc1) from Streptomyces avermitilis (strain ATCC 31267 / DSM 46492 / JCM 5070 / NBRC 14893 / NCIMB 12804 / NRRL 8165 / MA-4680).